A 229-amino-acid polypeptide reads, in one-letter code: Uracil-DNA glycosylase (229 aa).

The active-site Proton acceptor is Asp70.

This sequence belongs to the uracil-DNA glycosylase (UDG) superfamily. UNG family.

It localises to the cytoplasm. It carries out the reaction Hydrolyzes single-stranded DNA or mismatched double-stranded DNA and polynucleotides, releasing free uracil.. Excises uracil residues from the DNA which can arise as a result of misincorporation of dUMP residues by DNA polymerase or due to deamination of cytosine. The chain is Uracil-DNA glycosylase from Chlamydia trachomatis serovar L2b (strain UCH-1/proctitis).